The sequence spans 100 residues: Large ribosomal subunit protein uL23 (100 aa).

The protein belongs to the universal ribosomal protein uL23 family. As to quaternary structure, part of the 50S ribosomal subunit. Contacts protein L29, and trigger factor when it is bound to the ribosome.

One of the early assembly proteins it binds 23S rRNA. One of the proteins that surrounds the polypeptide exit tunnel on the outside of the ribosome. Forms the main docking site for trigger factor binding to the ribosome. The sequence is that of Large ribosomal subunit protein uL23 from Colwellia psychrerythraea (strain 34H / ATCC BAA-681) (Vibrio psychroerythus).